The chain runs to 406 residues: Succinylornithine transaminase (406 aa).

Lysine 252 carries the N6-(pyridoxal phosphate)lysine modification.

Belongs to the class-III pyridoxal-phosphate-dependent aminotransferase family. AstC subfamily. The cofactor is pyridoxal 5'-phosphate.

The enzyme catalyses N(2)-succinyl-L-ornithine + 2-oxoglutarate = N-succinyl-L-glutamate 5-semialdehyde + L-glutamate. The protein operates within amino-acid degradation; L-arginine degradation via AST pathway; L-glutamate and succinate from L-arginine: step 3/5. Catalyzes the transamination of N(2)-succinylornithine and alpha-ketoglutarate into N(2)-succinylglutamate semialdehyde and glutamate. Can also act as an acetylornithine aminotransferase. The sequence is that of Succinylornithine transaminase from Escherichia coli (strain SMS-3-5 / SECEC).